The sequence spans 280 residues: Transcription factor ovo-like homolog lin-48 (280 aa).

C2H2-type zinc fingers lie at residues 133–155, 161–183, 189–212, and 228–251; these read LTCH…IKCH, YLCT…TRTH, YKCE…RKVH, and FVCE…KVVH.

It localises to the nucleus. Its function is as follows. Transcription factor. Involved in development of the hindgut, the male tail, and the excretory duct cell. Involved in modulating function of excretory duct cells. Plays a role in left/right patterning of cell fates in the hindgut. The protein is Transcription factor ovo-like homolog lin-48 of Caenorhabditis elegans.